A 365-amino-acid polypeptide reads, in one-letter code: MSIEIANIKKSFGRTQVLNDISLDIPSGQMVALLGPSGSGKTTLLRIIAGLEHQTSGHIRFHGTDVSRLHARDRKVGFVFQHYALFRHMTVFDNIAFGLTVLPRRERPNAAAIKAKVTKLLEMVQLAHLADRYPAQLSGGQKQRVALARALAVEPQILLLDEPFGALDAQVRKELRRWLRQLHEELKFTSVFVTHDQEEATEVADRVVVMSQGNIEQADAPDQVWREPATRFVLEFMGEVNRLQGTIRGGQFHVGAHRWPLGYTPAYQGPVDLFLRPWEVDISRRTSLDSPLPVQVLEASPKGHYTQLVVQPLGWYNEPLTVVMHGDDAPQRGERLFVGLQHARLYNGDERIETRDEELALAQSA.

Residues 3–237 enclose the ABC transporter domain; that stretch reads IEIANIKKSF…PATRFVLEFM (235 aa). 35 to 42 contacts ATP; it reads GPSGSGKT.

It belongs to the ABC transporter superfamily. Sulfate/tungstate importer (TC 3.A.1.6) family. As to quaternary structure, the complex is composed of two ATP-binding proteins (CysA), two transmembrane proteins (CysT and CysW) and a solute-binding protein (CysP).

The protein resides in the cell inner membrane. It catalyses the reaction sulfate(out) + ATP + H2O = sulfate(in) + ADP + phosphate + H(+). It carries out the reaction thiosulfate(out) + ATP + H2O = thiosulfate(in) + ADP + phosphate + H(+). In terms of biological role, part of the ABC transporter complex CysAWTP involved in sulfate/thiosulfate import. Responsible for energy coupling to the transport system. In Escherichia coli (strain K12), this protein is Sulfate/thiosulfate import ATP-binding protein CysA.